A 62-amino-acid polypeptide reads, in one-letter code: Protein DsrB (62 aa).

This sequence belongs to the DsrB family.

This Shigella boydii serotype 18 (strain CDC 3083-94 / BS512) protein is Protein DsrB.